The following is a 511-amino-acid chain: Bifunctional purine biosynthesis protein PurH (511 aa).

The MGS-like domain occupies 1 to 145 (MKKRALVSVS…KNHKFVSVIV (145 aa)).

It belongs to the PurH family.

The enzyme catalyses (6R)-10-formyltetrahydrofolate + 5-amino-1-(5-phospho-beta-D-ribosyl)imidazole-4-carboxamide = 5-formamido-1-(5-phospho-D-ribosyl)imidazole-4-carboxamide + (6S)-5,6,7,8-tetrahydrofolate. The catalysed reaction is IMP + H2O = 5-formamido-1-(5-phospho-D-ribosyl)imidazole-4-carboxamide. It participates in purine metabolism; IMP biosynthesis via de novo pathway; 5-formamido-1-(5-phospho-D-ribosyl)imidazole-4-carboxamide from 5-amino-1-(5-phospho-D-ribosyl)imidazole-4-carboxamide (10-formyl THF route): step 1/1. The protein operates within purine metabolism; IMP biosynthesis via de novo pathway; IMP from 5-formamido-1-(5-phospho-D-ribosyl)imidazole-4-carboxamide: step 1/1. The chain is Bifunctional purine biosynthesis protein PurH from Bacillus cereus (strain B4264).